Consider the following 201-residue polypeptide: Large ribosomal subunit protein bL12m (201 aa).

The transit peptide at 1-38 directs the protein to the mitochondrion; it reads MLPVAASRCLWGPRLGLRGAALRLARQQMPSVCAARQL. 2 disordered regions span residues 37–60 and 109–130; these read QLRS…APKE and VSAA…QKER. Lysine 128, lysine 141, lysine 145, and lysine 147 each carry N6-acetyllysine. Residue lysine 153 is modified to N6-acetyllysine; alternate. The residue at position 153 (lysine 153) is an N6-succinyllysine; alternate. Lysine 153 participates in a covalent cross-link: Glycyl lysine isopeptide (Lys-Gly) (interchain with G-Cter in ubiquitin). At lysine 165 the chain carries N6-succinyllysine. N6-acetyllysine occurs at positions 166 and 176. Lysine 181 is modified (N6-acetyllysine; alternate). Lysine 181 carries the post-translational modification N6-succinyllysine; alternate. Lysine 188 carries the post-translational modification N6-acetyllysine.

Belongs to the bacterial ribosomal protein bL12 family. In terms of assembly, component of the mitochondrial ribosome large subunit (39S) which comprises a 16S rRNA and about 50 distinct proteins. Interacts with NOA1. In terms of processing, two mature forms are produced by differential two-step proteolytic cleavage. Cleaved by the mitochondrial processing protease to produce the long mature form and subsequently by the mitochondrial intermediate protease to produce the short mature form. In the presence of CUL3, undergoes 'Lys-63'-linked ubiquitination at Lys-153 which results in proteasomal degradation.

Its subcellular location is the mitochondrion matrix. In terms of biological role, as a component of the mitochondrial large ribosomal subunit, plays a role in mitochondrial translation. When present in mitochondria as a free protein not associated with the ribosome, associates with mitochondrial RNA polymerase POLRMT to activate transcription. Required for POLRMT stability. This chain is Large ribosomal subunit protein bL12m (Mrpl12), found in Mus musculus (Mouse).